A 262-amino-acid chain; its full sequence is 1-(5-phosphoribosyl)-5-[(5-phosphoribosylamino)methylideneamino] imidazole-4-carboxamide isomerase (262 aa).

Catalysis depends on Asp-8, which acts as the Proton acceptor. The active-site Proton donor is Asp-129. The disordered stretch occupies residues Lys-243–Gly-262.

It belongs to the HisA/HisF family.

It localises to the cytoplasm. It catalyses the reaction 1-(5-phospho-beta-D-ribosyl)-5-[(5-phospho-beta-D-ribosylamino)methylideneamino]imidazole-4-carboxamide = 5-[(5-phospho-1-deoxy-D-ribulos-1-ylimino)methylamino]-1-(5-phospho-beta-D-ribosyl)imidazole-4-carboxamide. It functions in the pathway amino-acid biosynthesis; L-histidine biosynthesis; L-histidine from 5-phospho-alpha-D-ribose 1-diphosphate: step 4/9. The polypeptide is 1-(5-phosphoribosyl)-5-[(5-phosphoribosylamino)methylideneamino] imidazole-4-carboxamide isomerase (Desulforudis audaxviator (strain MP104C)).